Consider the following 434-residue polypeptide: UDP-N-acetylglucosamine 1-carboxyvinyltransferase (434 aa).

22–23 lines the phosphoenolpyruvate pocket; the sequence is KN. Arg97 is a binding site for UDP-N-acetyl-alpha-D-glucosamine. The active-site Proton donor is Asp121. Positions 319 and 341 each coordinate UDP-N-acetyl-alpha-D-glucosamine.

It belongs to the EPSP synthase family. MurA subfamily.

The protein resides in the cytoplasm. It carries out the reaction phosphoenolpyruvate + UDP-N-acetyl-alpha-D-glucosamine = UDP-N-acetyl-3-O-(1-carboxyvinyl)-alpha-D-glucosamine + phosphate. It functions in the pathway cell wall biogenesis; peptidoglycan biosynthesis. Functionally, cell wall formation. Adds enolpyruvyl to UDP-N-acetylglucosamine. The sequence is that of UDP-N-acetylglucosamine 1-carboxyvinyltransferase from Bacteroides fragilis (strain ATCC 25285 / DSM 2151 / CCUG 4856 / JCM 11019 / LMG 10263 / NCTC 9343 / Onslow / VPI 2553 / EN-2).